We begin with the raw amino-acid sequence, 361 residues long: Chorismate synthase (361 aa).

2 residues coordinate NADP(+): Arg48 and Arg54. FMN-binding positions include 125-127, 238-239, Gly278, 293-297, and Arg319; these read RSS, NA, and KPTSS.

It belongs to the chorismate synthase family. As to quaternary structure, homotetramer. FMNH2 is required as a cofactor.

It carries out the reaction 5-O-(1-carboxyvinyl)-3-phosphoshikimate = chorismate + phosphate. Its pathway is metabolic intermediate biosynthesis; chorismate biosynthesis; chorismate from D-erythrose 4-phosphate and phosphoenolpyruvate: step 7/7. Functionally, catalyzes the anti-1,4-elimination of the C-3 phosphate and the C-6 proR hydrogen from 5-enolpyruvylshikimate-3-phosphate (EPSP) to yield chorismate, which is the branch point compound that serves as the starting substrate for the three terminal pathways of aromatic amino acid biosynthesis. This reaction introduces a second double bond into the aromatic ring system. This Shigella flexneri serotype 5b (strain 8401) protein is Chorismate synthase.